The sequence spans 302 residues: tRNA-cytidine(32) 2-sulfurtransferase (302 aa).

Positions 43-48 (SGGKDS) match the PP-loop motif motif. Residues Cys118, Cys121, and Cys209 each contribute to the [4Fe-4S] cluster site.

This sequence belongs to the TtcA family. In terms of assembly, homodimer. It depends on Mg(2+) as a cofactor. [4Fe-4S] cluster serves as cofactor.

It is found in the cytoplasm. It catalyses the reaction cytidine(32) in tRNA + S-sulfanyl-L-cysteinyl-[cysteine desulfurase] + AH2 + ATP = 2-thiocytidine(32) in tRNA + L-cysteinyl-[cysteine desulfurase] + A + AMP + diphosphate + H(+). Its pathway is tRNA modification. In terms of biological role, catalyzes the ATP-dependent 2-thiolation of cytidine in position 32 of tRNA, to form 2-thiocytidine (s(2)C32). The sulfur atoms are provided by the cysteine/cysteine desulfurase (IscS) system. The chain is tRNA-cytidine(32) 2-sulfurtransferase from Polynucleobacter asymbioticus (strain DSM 18221 / CIP 109841 / QLW-P1DMWA-1) (Polynucleobacter necessarius subsp. asymbioticus).